We begin with the raw amino-acid sequence, 382 residues long: MAAQRPLTIALVAGETSGDILGAGLIRALKARVPNARFVGVAGPRMQAEGCEAWYEMEELAVMGIVEVLGRLRRLLHIRADLTRRFTELKPDVFVGIDAPDFNITLEGNLKKQGIKTIHYVSPSVWAWRQKRVFKIGRSTHMVLAFLPFEKAFYDKFNVPCRFIGHTMADAMPLDPDKNAARDVLGIPHDAHCLALLPGSRGAEVEMLSADFLKTAQLLRQRYPDLEVVVPLVNAKRREQFEKIKAEVAPDLAVHLLDGMAREAMIASDAALLASGTAALECMLAKCPMVVGYRMKPFTFWLAKRLVKTEYVSLPNLLAGRELVKELLQEECEPQKLAEALLPLLANGKTSHAMHDTFRELHQQIRCNADEQAADAVLELAQ.

The protein belongs to the LpxB family.

It carries out the reaction 2-N,3-O-bis[(3R)-3-hydroxytetradecanoyl]-alpha-D-glucosaminyl 1-phosphate + UDP-2-N,3-O-bis[(3R)-3-hydroxytetradecanoyl]-alpha-D-glucosamine = lipid A disaccharide (E. coli) + UDP + H(+). It catalyses the reaction a lipid X + a UDP-2-N,3-O-bis[(3R)-3-hydroxyacyl]-alpha-D-glucosamine = a lipid A disaccharide + UDP + H(+). It participates in glycolipid biosynthesis; lipid IV(A) biosynthesis; lipid IV(A) from (3R)-3-hydroxytetradecanoyl-[acyl-carrier-protein] and UDP-N-acetyl-alpha-D-glucosamine: step 5/6. Functionally, condensation of UDP-2,3-diacylglucosamine and 2,3-diacylglucosamine-1-phosphate to form lipid A disaccharide, a precursor of lipid A, a phosphorylated glycolipid that anchors the lipopolysaccharide to the outer membrane of the cell. This chain is Lipid-A-disaccharide synthase, found in Salmonella heidelberg (strain SL476).